The chain runs to 287 residues: Phosphoribosylaminoimidazole-succinocarboxamide synthase (287 aa).

Belongs to the SAICAR synthetase family.

The catalysed reaction is 5-amino-1-(5-phospho-D-ribosyl)imidazole-4-carboxylate + L-aspartate + ATP = (2S)-2-[5-amino-1-(5-phospho-beta-D-ribosyl)imidazole-4-carboxamido]succinate + ADP + phosphate + 2 H(+). Its pathway is purine metabolism; IMP biosynthesis via de novo pathway; 5-amino-1-(5-phospho-D-ribosyl)imidazole-4-carboxamide from 5-amino-1-(5-phospho-D-ribosyl)imidazole-4-carboxylate: step 1/2. The protein is Phosphoribosylaminoimidazole-succinocarboxamide synthase of Neisseria meningitidis serogroup C (strain 053442).